The primary structure comprises 227 residues: Isopentenyl-diphosphate delta-isomerase 2 (227 aa).

A substrate-binding site is contributed by Lys-36. His-40 and His-51 together coordinate Mg(2+). In terms of domain architecture, Nudix hydrolase spans 49-199 (LLHRAFSVVL…EVKVTPWLRT (151 aa)). Substrate is bound by residues Arg-70 and Lys-74. Ser-86 is an active-site residue. Ser-87 serves as a coordination point for substrate. Glu-146 and Glu-148 together coordinate Mg(2+). Residue Glu-148 is part of the active site. The Microbody targeting signal motif lies at 225–227 (HRV).

The protein belongs to the IPP isomerase type 1 family. Requires Mg(2+) as cofactor. Muscle-specific expression.

The protein resides in the peroxisome. The enzyme catalyses isopentenyl diphosphate = dimethylallyl diphosphate. Its pathway is isoprenoid biosynthesis; dimethylallyl diphosphate biosynthesis; dimethylallyl diphosphate from isopentenyl diphosphate: step 1/1. Functionally, catalyzes the 1,3-allylic rearrangement of the homoallylic substrate isopentenyl (IPP) to its highly electrophilic allylic isomer, dimethylallyl diphosphate (DMAPP). The polypeptide is Isopentenyl-diphosphate delta-isomerase 2 (IDI2) (Homo sapiens (Human)).